Consider the following 221-residue polypeptide: UPF0758 protein Ent638_0101 (221 aa).

An MPN domain is found at 99-221; it reads PLLSPEMTKD…YVSFAEQGWI (123 aa). Zn(2+)-binding residues include His-170, His-172, and Asp-183. A JAMM motif motif is present at residues 170 to 183; the sequence is HNHPSGCAEPSKAD.

Belongs to the UPF0758 family. YicR subfamily.

The polypeptide is UPF0758 protein Ent638_0101 (Enterobacter sp. (strain 638)).